A 1393-amino-acid polypeptide reads, in one-letter code: MTKSLTSRKRIRKDFGRIPTVAPMPNLIEVQKSSYDQFLQIGVPVDKRTDSGLQEVFKSVFPIRDFSGKGELEFVAYELEEPKYDTDECQQRGMTFAAPLKVTLRLLVWDVDEETGARSIRDIKEQDVYMGDMPLMTSNGTFIINGTERVIVSQMHRSPGVFFDHDKGKTHSSGKFLFAARVIPYRGSWLDFEFDAKDMVYVRIDRRRKLPVTTLLYALEGAAATALREARTAEGRSVDPSEIAGMTSEEILDFFYQKLSYKRDDKGWKVDFKPDHLRGVKLMFDLVDAATGEVKIEAGTKVTPRAARKLAEDGMTEMRVFTEELVGRYAAEDMINEASGEIYAEAGEELTEAMLADMEKAGFTELRVLHIDHVNVGPYVRNTLAMDKNTTREEALIDIYRVMRPGEPPTLETADALFKGLFFDSERYDLSAVGRVKMNARLGFTMQEAPDTMRVLRKEDVLHIIRQLVELKDGKGEIDDIDHLGNRRVRSVGELMENQYRVGLLRMERAIRERMSSVDIDTVMPHDLINAKPAAAAVREFFGSSQLSQFMDQTNPLSEITHKRRLSALGPGGLTRERAGFEVRDVHPTHYGRICPIETPEGPNIGLINSLATFARVNQYGFIESPYRKVVEGTVTDEVTYMSAMEEGKYVIAQANAALTEDGHFADDLISCRKASDFEMVQPQDIDYIDVSPKQLVSVAAALIPFLENDDANRALMGSNMQRQAVPLVKAEAPYVGTGMEAAVARDSGATIAAKRAGVVQQVDATRIVIRATEDLKIAESGVDIYRLQKFQRSNQSTCINQRPLVKVGDLVGRGEILADGPLTEMGELALGRNVLVAFMPWNGYNFEDSILISERIVSDDVFTSIHIEEFEVMARDTKLGQEEITRDIPNVGEEALKNLDEAGIVYIGAEVQAGDILVGKVTPKGESPMTPEEKLLRAIFGEKASDVRDTSLRIPPGVTGTVVEVRVFNRRGVEKDERALAIERQEIESLAKDRDDERAILEGSFARRLKELLIGQKVVGGPRGMATGGVISEDLLSGYTAAQWRQIAVENDETATEIEGLKKAYEESIAKIQERFENKVEKLQRGDELPPGVLKMVKVFVAVKRKLQPGDKMAGRHGNKGVISKINPIEDMPYLEDGTYVDIVLNPLGVPSRMNVGQILETHLGWACRGLGAQIGALLEQVKRGLIPINDLREKLDDVYGPRHAKEDLAPMGDDQIKELAFNLRSGVPIATPVFDGARESDIVDMLRKAGLDSSGQVTLSDGRTGEPFDRKVTVGYIYMLKLHHLVDDKIHARSIGPYSLVTQQPLGGKAQFGGQRFGEMEVWALEAYGAAYTLQEMLTVKSDDVSGRTKVYEAIVKGDDTFEAGIPESFNVLVKEMRSLGLDVELGQSSF.

The protein belongs to the RNA polymerase beta chain family. The RNAP catalytic core consists of 2 alpha, 1 beta, 1 beta' and 1 omega subunit. When a sigma factor is associated with the core the holoenzyme is formed, which can initiate transcription.

The enzyme catalyses RNA(n) + a ribonucleoside 5'-triphosphate = RNA(n+1) + diphosphate. Its function is as follows. DNA-dependent RNA polymerase catalyzes the transcription of DNA into RNA using the four ribonucleoside triphosphates as substrates. The chain is DNA-directed RNA polymerase subunit beta from Rhodospirillum rubrum (strain ATCC 11170 / ATH 1.1.1 / DSM 467 / LMG 4362 / NCIMB 8255 / S1).